A 286-amino-acid polypeptide reads, in one-letter code: Plasma membrane ascorbate-dependent reductase CYBRD1 (286 aa).

The Cytoplasmic portion of the chain corresponds to 1–7 (MAMEGYW). Residues 8–32 (RFLALLGSALLVGFLSVIFALVWVL) form a helical membrane-spanning segment. A Cytochrome b561 domain is found at 15-220 (SALLVGFLSV…FGALIFWIVT (206 aa)). The Extracellular segment spans residues 33-47 (HYREGLGWDGSALEF). Residues 48–69 (NWHPVLMVTGFVFIQGIAIIVY) traverse the membrane as a helical segment. Residues His50, Arg70, and Lys79 each contribute to the heme b site. Over 70-78 (RLPWTWKCS) the chain is Cytoplasmic. Positions 79 and 83 each coordinate L-ascorbate. A helical membrane pass occupies residues 79–105 (KLLMKSIHAGLNAVAAILAIISVVAVF). His86 provides a ligand contact to heme b. Over 106–118 (ENHNVNNIANMYS) the chain is Extracellular. His108 provides a ligand contact to Fe(3+). Residues 115-118 (NMYS) and His120 contribute to the heme b site. A helical transmembrane segment spans residues 119–144 (LHSWVGLIAVICYLLQLLSGFSVFLL). Residues 145–151 (PWAPLSL) lie on the Cytoplasmic side of the membrane. Arg152 provides a ligand contact to L-ascorbate. The chain crosses the membrane as a helical span at residues 152-179 (RAFLMPIHVYSGIVIFGTVIATALMGLT). Residues His159 and Glu180 each contribute to the heme b site. Residues 180–197 (EKLIFSLRDPAYSTFPPE) lie on the Extracellular side of the membrane. The chain crosses the membrane as a helical span at residues 198–222 (GVFVNTLGLLILVFGALIFWIVTRP). Over 223-286 (QWKRPKEPNS…LDEAGQRSTM (64 aa)) the chain is Cytoplasmic. Lys225 lines the heme b pocket. The disordered stretch occupies residues 229–268 (EPNSTILHPNGGTEQGARGSMPAYSGNNMDKSDSELNSEV). Phosphoserine is present on Ser232. Thr285 is subject to Phosphothreonine.

In terms of assembly, homodimer. Heme b serves as cofactor. As to expression, present in erythrocyte membranes (at protein level). Also expressed in respiratory epithelium.

It is found in the cell membrane. The protein localises to the apical cell membrane. The catalysed reaction is Fe(3+)(out) + L-ascorbate(in) = monodehydro-L-ascorbate radical(in) + Fe(2+)(out) + H(+). It carries out the reaction Cu(2+)(out) + L-ascorbate(in) = Cu(+)(out) + monodehydro-L-ascorbate radical(in) + H(+). The enzyme catalyses monodehydro-L-ascorbate radical(out) + L-ascorbate(in) = monodehydro-L-ascorbate radical(in) + L-ascorbate(out). With respect to regulation, activated by chelators like citrate, malate, and oxalate specially at alkaline pH. In terms of biological role, plasma membrane reductase that uses cytoplasmic ascorbate as an electron donor to reduce extracellular Fe(3+) into Fe(2+). Probably functions in dietary iron absorption at the brush border of duodenal enterocytes by producing Fe(2+), the divalent form of iron that can be transported into enterocytes. It is also able to reduce extracellular monodehydro-L-ascorbate and may be involved in extracellular ascorbate regeneration by erythrocytes in blood. May also act as a ferrireductase in airway epithelial cells. May also function as a cupric transmembrane reductase. The sequence is that of Plasma membrane ascorbate-dependent reductase CYBRD1 from Homo sapiens (Human).